The following is a 257-amino-acid chain: Uroplakin-1a (257 aa).

The Cytoplasmic portion of the chain corresponds to 1–13 (MASAATEGEKGSP). A helical membrane pass occupies residues 14–34 (VVVGLLVVGNIIILLSGLALF). At 35–58 (AETVWVTADQYRVYPLMGVSGKDD) the chain is on the extracellular side. A helical membrane pass occupies residues 59 to 85 (VFAGAWIAIFCGFSFFVVASFGVGAAL). Residues 86–90 (CRRRY) are Cytoplasmic-facing. The chain crosses the membrane as a helical span at residues 91-111 (MILTYLLLMLIVYIFECASCI). At 112–229 (TSYTHRDYMV…HIGHAIDSYT (118 aa)) the chain is on the extracellular side. The N-linked (GlcNAc...) asparagine glycan is linked to Asn169. Residues 230-251 (WGISWFGFAILMWTLPVMLIAM) form a helical membrane-spanning segment. At 252-257 (YFYTTL) the chain is on the cytoplasmic side.

The protein belongs to the tetraspanin (TM4SF) family. Homodimer; disulfide-linked. Interacts with uroplakin-2 (UPK2). Binds to uropathogenic E.coli fimH.

It is found in the membrane. Component of the asymmetric unit membrane (AUM); a highly specialized biomembrane elaborated by terminally differentiated urothelial cells. May play an important role in normal bladder epithelial physiology, possibly in regulating membrane permeability of superficial umbrella cells or in stabilizing the apical membrane through AUM/cytoskeletal interactions. This chain is Uroplakin-1a (Upk1a), found in Mus musculus (Mouse).